Here is a 459-residue protein sequence, read N- to C-terminus: uncharacterized protein (459 aa).

K285 bears the N6-(pyridoxal phosphate)lysine mark.

This sequence belongs to the class-III pyridoxal-phosphate-dependent aminotransferase family.

Its subcellular location is the cytoplasm. This is an uncharacterized protein from Schizosaccharomyces pombe (strain 972 / ATCC 24843) (Fission yeast).